Consider the following 347-residue polypeptide: Globoside alpha-1,3-N-acetylgalactosaminyltransferase 1 (347 aa).

Over 1–6 (MTRPRL) the chain is Cytoplasmic. A helical; Signal-anchor for type II membrane protein membrane pass occupies residues 7–27 (AQGLAFFLLGGTGLWVLWKFI). Topologically, residues 28–347 (KDWLLVSYIP…VKKNANWLRT (320 aa)) are lumenal. A glycan (N-linked (GlcNAc...) asparagine) is linked at Asn-108. Residues 116–121 (FAVGKY), 206–208 (DVD), and 228–231 (HPGY) each bind substrate. Mn(2+) contacts are provided by Asp-206 and Asp-208. Glu-298 functions as the Nucleophile in the catalytic mechanism.

It belongs to the glycosyltransferase 6 family. It depends on Mn(2+) as a cofactor.

The protein resides in the golgi apparatus membrane. It catalyses the reaction a globoside Gb4Cer (d18:1(4E)) + UDP-N-acetyl-alpha-D-galactosamine = a globoside Forssman (d18:1(4E)) + UDP + H(+). The catalysed reaction is a globoside Gb4Cer + UDP-N-acetyl-alpha-D-galactosamine = a globoside IV3GalNAc-Gb4Cer + UDP + H(+). It functions in the pathway protein modification; protein glycosylation. Its function is as follows. Catalyzes the formation of Forssman glycolipid via the addition of N-acetylgalactosamine (GalNAc) in alpha-1,3-linkage to GalNAcb-1,3Gala-1,4Galb-1,4GlcCer (Gb4Cer). Forssman glycolipid (also called Forssman antigen; FG) probably serves for adherence of some pathogens. Conversely, it diminishes Shiga toxins susceptibility. The protein is Globoside alpha-1,3-N-acetylgalactosaminyltransferase 1 of Mus musculus (Mouse).